The sequence spans 396 residues: DNA replication and repair protein RecF (396 aa).

Gly-30–Thr-37 lines the ATP pocket.

Belongs to the RecF family.

The protein localises to the cytoplasm. Functionally, the RecF protein is involved in DNA metabolism; it is required for DNA replication and normal SOS inducibility. RecF binds preferentially to single-stranded, linear DNA. It also seems to bind ATP. The polypeptide is DNA replication and repair protein RecF (Thermomicrobium roseum (strain ATCC 27502 / DSM 5159 / P-2)).